A 266-amino-acid polypeptide reads, in one-letter code: Small ribosomal subunit protein uS3m (266 aa).

The protein belongs to the universal ribosomal protein uS3 family.

It is found in the mitochondrion. In Mycosarcoma maydis (Corn smut fungus), this protein is Small ribosomal subunit protein uS3m (MRPS3).